A 343-amino-acid polypeptide reads, in one-letter code: Dihydroorotase (343 aa).

His14 and His16 together coordinate Zn(2+). Residues 16–18 and Asn42 contribute to the substrate site; that span reads HLR. 3 residues coordinate Zn(2+): Lys100, His137, and His175. The residue at position 100 (Lys100) is an N6-carboxylysine. His137 contributes to the substrate binding site. Substrate is bound at residue Leu220. Zn(2+) is bound at residue Asp248. Asp248 is an active-site residue. 2 residues coordinate substrate: His252 and Ala264.

Belongs to the metallo-dependent hydrolases superfamily. DHOase family. Class II DHOase subfamily. In terms of assembly, homodimer. Zn(2+) is required as a cofactor.

The enzyme catalyses (S)-dihydroorotate + H2O = N-carbamoyl-L-aspartate + H(+). The protein operates within pyrimidine metabolism; UMP biosynthesis via de novo pathway; (S)-dihydroorotate from bicarbonate: step 3/3. In terms of biological role, catalyzes the reversible cyclization of carbamoyl aspartate to dihydroorotate. The chain is Dihydroorotase from Parasynechococcus marenigrum (strain WH8102).